Consider the following 311-residue polypeptide: tRNA dimethylallyltransferase (311 aa).

14 to 21 (GPTAVGKT) lines the ATP pocket. Substrate is bound at residue 16–21 (TAVGKT). Residues 39-42 (DSMQ) are interaction with substrate tRNA.

Belongs to the IPP transferase family. Monomer. It depends on Mg(2+) as a cofactor.

It carries out the reaction adenosine(37) in tRNA + dimethylallyl diphosphate = N(6)-dimethylallyladenosine(37) in tRNA + diphosphate. Its function is as follows. Catalyzes the transfer of a dimethylallyl group onto the adenine at position 37 in tRNAs that read codons beginning with uridine, leading to the formation of N6-(dimethylallyl)adenosine (i(6)A). This Lactiplantibacillus plantarum (strain ATCC BAA-793 / NCIMB 8826 / WCFS1) (Lactobacillus plantarum) protein is tRNA dimethylallyltransferase.